Reading from the N-terminus, the 205-residue chain is Probable GTP-binding protein EngB (205 aa).

Positions 22-194 (ELPEIAFAGR…WESILDLCEI (173 aa)) constitute an EngB-type G domain. GTP-binding positions include 30–37 (GRSNVGKS), 57–61 (GRTQL), 75–78 (DLPG), 142–145 (TKAD), and 173–175 (FSA). 2 residues coordinate Mg(2+): serine 37 and threonine 59.

Belongs to the TRAFAC class TrmE-Era-EngA-EngB-Septin-like GTPase superfamily. EngB GTPase family. It depends on Mg(2+) as a cofactor.

Functionally, necessary for normal cell division and for the maintenance of normal septation. The chain is Probable GTP-binding protein EngB from Desulfatibacillum aliphaticivorans.